The primary structure comprises 800 residues: Isoamylase 2, chloroplastic (800 aa).

The span at 1 to 10 (MASLPAPPTP) shows a compositional bias: pro residues. A disordered region spans residues 1 to 22 (MASLPAPPTPLGSCPRGRGGGR). The N-terminal 34 residues, 1 to 34 (MASLPAPPTPLGSCPRGRGGGRVVARPRRAGLAC), are a transit peptide targeting the chloroplast.

Belongs to the glycosyl hydrolase 13 family. In terms of assembly, forms a hetero-hexamer composed of five ISA1 and one ISA2. In terms of tissue distribution, highly expressed in developing endosperm and leaves.

It is found in the plastid. It localises to the chloroplast. The catalysed reaction is Hydrolysis of (1-&gt;6)-alpha-D-glucosidic branch linkages in glycogen, amylopectin and their beta-limit dextrins.. In terms of biological role, starch-debranching enzyme involved in amylopectin biosynthesis in endosperm. Functions by removing excess branches or improper branches that interfere with the formation of double helices of the cluster chains of amylopectin and crystallization of starch. Works together with ISA1 as heterooligomer. The heterooligomer ISA1 and ISA2 possesses higher affinity than the ISA1 homooligomer for various branched polyglucans in vitro, but no marked differences exist in chain preferences for debranching of amylopectin and phytoglycogen between these forms. The sequence is that of Isoamylase 2, chloroplastic from Oryza sativa subsp. japonica (Rice).